We begin with the raw amino-acid sequence, 325 residues long: Aldo-keto reductase family 1 member A1 (325 aa).

An N-acetylthreonine modification is found at Thr-2. Ser-4 is modified (phosphoserine). NADP(+) contacts are provided by residues Gly-11–Gly-20, Thr-21, and Trp-22. The N-linked (Glc) (glycation) lysine glycan is linked to Lys-23. Phosphoserine is present on Ser-38. Asp-45 serves as a coordination point for NADP(+). Tyr-50 functions as the Proton donor in the catalytic mechanism. 2 N-linked (Glc) (glycation) lysine glycosylation sites follow: Lys-68 and Lys-85. Lys-127 carries the N6-acetyllysine; alternate modification. Lys-127 is subject to N6-succinyllysine; alternate. Lys-141 carries an N-linked (Glc) (glycation) lysine glycan. N6-succinyllysine is present on Lys-145. Lys-153 carries an N-linked (Glc) (glycation) lysine glycan. NADP(+) is bound by residues Ser-162, Asn-163, Ser-211, Leu-213, Ser-215, Ser-216, Lys-263, Ser-264, Ile-265, Thr-266, Arg-269, Gln-272, and Asn-273. The residue at position 211 (Ser-211) is a Phosphoserine.

This sequence belongs to the aldo/keto reductase family. As to quaternary structure, monomer. In terms of tissue distribution, widely expressed.

Its subcellular location is the cytoplasm. The protein resides in the cytosol. It is found in the apical cell membrane. It carries out the reaction a primary alcohol + NADP(+) = an aldehyde + NADPH + H(+). The enzyme catalyses L-gulonate + NADP(+) = aldehydo-D-glucuronate + NADPH + H(+). It catalyses the reaction L-gulono-1,4-lactone + NADP(+) = D-glucurono-3,6-lactone + NADPH + H(+). The catalysed reaction is allyl alcohol + NADP(+) = acrolein + NADPH + H(+). It carries out the reaction glycerol + NADP(+) = D-glyceraldehyde + NADPH + H(+). The enzyme catalyses glycerol + NADP(+) = L-glyceraldehyde + NADPH + H(+). It catalyses the reaction hydroxyacetone + NADP(+) = methylglyoxal + NADPH + H(+). The catalysed reaction is 3-deoxyfructose + NADP(+) = 3-deoxyglucosone + NADPH + H(+). It carries out the reaction (R)-mevalonate + NADP(+) = (R)-mevaldate + NADPH + H(+). The enzyme catalyses pyridine 3-methanol + NADP(+) = pyridine-3-carbaldehyde + NADPH + H(+). It catalyses the reaction S-nitroso-CoA + NADPH + H(+) = sulfinamide-CoA + NADP(+). The catalysed reaction is S-nitrosoglutathione + NADPH + H(+) = S-(hydroxysulfenamide)glutathione + NADP(+). Functionally, catalyzes the NADPH-dependent reduction of a wide variety of carbonyl-containing compounds to their corresponding alcohols. Displays enzymatic activity towards endogenous metabolites such as aromatic and aliphatic aldehydes, ketones, monosaccharides and bile acids. Plays an important role in ascorbic acid biosynthesis by catalyzing the reduction of D-glucuronic acid and D-glucurono-gamma-lactone. Functions as a detoxifiying enzyme by reducing a range of toxic aldehydes. Reduces methylglyoxal and 3-deoxyglucosone, which are present at elevated levels under hyperglycemic conditions and are cytotoxic. Involved also in the detoxification of lipid-derived aldehydes like acrolein. Plays a role in the activation of procarcinogens, such as polycyclic aromatic hydrocarbon trans-dihydrodiols, and in the metabolism of various xenobiotics and drugs. Also acts as an inhibitor of protein S-nitrosylation by mediating degradation of S-nitroso-coenzyme A (S-nitroso-CoA), a cofactor required to S-nitrosylate proteins. S-nitroso-CoA reductase activity is involved in reprogramming intermediary metabolism in renal proximal tubules, notably by inhibiting protein S-nitrosylation of isoform 2 of PKM (PKM2). Also acts as a S-nitroso-glutathione reductase by catalyzing the NADPH-dependent reduction of S-nitrosoglutathione. Displays no reductase activity towards retinoids. In Rattus norvegicus (Rat), this protein is Aldo-keto reductase family 1 member A1 (Akr1a1).